The primary structure comprises 185 residues: Calcium and integrin-binding family member 4 (185 aa).

3 consecutive EF-hand domains span residues 62–95 (RVNP…FSEQ), 97–132 (CPSL…LLKS), and 138–174 (DLLM…SPDF). Residues aspartate 110, asparagine 112, asparagine 114, and aspartate 121 each coordinate Ca(2+).

As to quaternary structure, interacts with ITGA2B (via C-terminus cytoplasmic tail region); the interaction is stabilized/increased in a calcium- and magnesium-dependent manner. In terms of tissue distribution, expressed weakly in megakaryocytes and endothelial cells.

The polypeptide is Calcium and integrin-binding family member 4 (Cib4) (Mus musculus (Mouse)).